We begin with the raw amino-acid sequence, 68 residues long: uncharacterized protein (68 aa).

This is an uncharacterized protein from Bacillus subtilis (strain 168).